Reading from the N-terminus, the 860-residue chain is Linoleate 9S-lipoxygenase A (860 aa).

The PLAT domain occupies 29-159 (NALDFTDLAG…RYKSDRIFFA (131 aa)). Residues 162–860 (PYLPSETPEL…GKGIPNSVSI (699 aa)) enclose the Lipoxygenase domain. The tract at residues 209-246 (PDQGKENVRTTLGGSADYPYPRRGRTGRPPTRTDPKSE) is disordered. Fe cation is bound by residues H521, H526, H712, N716, and I860.

This sequence belongs to the lipoxygenase family. Monomer. It depends on Fe cation as a cofactor. As to expression, expressed in germinating seeds as well as in ripening fruit.

The protein resides in the cytoplasm. The catalysed reaction is (9Z,12Z)-octadecadienoate + O2 = (9S)-hydroperoxy-(10E,12Z)-octadecadienoate. It functions in the pathway lipid metabolism; oxylipin biosynthesis. Its function is as follows. Plant lipoxygenase may be involved in a number of diverse aspects of plant physiology including growth and development, pest resistance, and senescence or responses to wounding. It catalyzes the hydroperoxidation of lipids containing a cis,cis-1,4-pentadiene structure. The sequence is that of Linoleate 9S-lipoxygenase A (LOX1.1) from Solanum lycopersicum (Tomato).